Here is a 304-residue protein sequence, read N- to C-terminus: Acetyl-coenzyme A carboxylase carboxyl transferase subunit beta (304 aa).

Residues 23 to 292 form the CoA carboxyltransferase N-terminal domain; that stretch reads VWTKCDSCGQ…PNPEAPREGV (270 aa). Residues cysteine 27, cysteine 30, cysteine 46, and cysteine 49 each coordinate Zn(2+). The C4-type zinc-finger motif lies at 27–49; that stretch reads CDSCGQVLYRAELERNLEVCPKC. The segment at 284–304 is disordered; that stretch reads NPEAPREGVVVPPVPDQEPEA. Over residues 295 to 304 the composition is skewed to pro residues; sequence PPVPDQEPEA.

Belongs to the AccD/PCCB family. As to quaternary structure, acetyl-CoA carboxylase is a heterohexamer composed of biotin carboxyl carrier protein (AccB), biotin carboxylase (AccC) and two subunits each of ACCase subunit alpha (AccA) and ACCase subunit beta (AccD). The cofactor is Zn(2+).

It is found in the cytoplasm. It carries out the reaction N(6)-carboxybiotinyl-L-lysyl-[protein] + acetyl-CoA = N(6)-biotinyl-L-lysyl-[protein] + malonyl-CoA. It participates in lipid metabolism; malonyl-CoA biosynthesis; malonyl-CoA from acetyl-CoA: step 1/1. Component of the acetyl coenzyme A carboxylase (ACC) complex. Biotin carboxylase (BC) catalyzes the carboxylation of biotin on its carrier protein (BCCP) and then the CO(2) group is transferred by the transcarboxylase to acetyl-CoA to form malonyl-CoA. The protein is Acetyl-coenzyme A carboxylase carboxyl transferase subunit beta of Shigella boydii serotype 18 (strain CDC 3083-94 / BS512).